The sequence spans 448 residues: Acyl-lipid (9-3)-desaturase (448 aa).

Residues 6 to 90 (KKYITSDELK…LKDYSVSEVS (85 aa)) enclose the Cytochrome b5 heme-binding domain. Heme-binding residues include His-41 and His-64. Helical transmembrane passes span 112–132 (IMFA…YGVL) and 137–157 (VLVH…SGWI). A Histidine box-1 motif is present at residues 159 to 163 (HDAGH). The chain crosses the membrane as a helical span at residues 172–192 (LNKFMGIFAANCLSGISIGWW). The Histidine box-2 signature appears at 196–200 (HNAHH). 3 helical membrane-spanning segments follow: residues 212 to 232 (LQYI…TSHF), 254 to 274 (FYPI…IMLL), and 286 to 306 (LLGC…LPNW). A Histidine box-3 motif is present at residues 373–377 (QIEHH).

It belongs to the fatty acid desaturase type 1 family.

The protein localises to the endoplasmic reticulum membrane. It catalyses the reaction (9Z,12Z,15Z)-octadecatrienoyl-containing glycerolipid + 2 Fe(II)-[cytochrome b5] + O2 + 2 H(+) = (6Z,9Z,12Z,15Z)-octadecatetraenoyl-containing glycerolipid + 2 Fe(III)-[cytochrome b5] + 2 H2O. The enzyme catalyses a (9Z,12Z)-octadecadienoyl-containing glycerolipid + 2 Fe(II)-[cytochrome b5] + O2 + 2 H(+) = (6Z,9Z,12Z)-octadecatrienoyl-containing glycerolipid + 2 Fe(III)-[cytochrome b5] + 2 H2O. The protein operates within lipid metabolism; polyunsaturated fatty acid biosynthesis. Its function is as follows. Fatty acid desaturase able to introduce a delta(6)-double bond into delta(9)-unsaturated fatty-acid substrates. Can use both linoleic acid (18:2(9Z,12Z)) and alpha-linolenic acid (18:3(9Z,12Z,15Z)) as substrates. The chain is Acyl-lipid (9-3)-desaturase from Borago officinalis (Bourrache).